A 513-amino-acid polypeptide reads, in one-letter code: Bifunctional pantoate ligase/cytidylate kinase (513 aa).

The tract at residues 1–283 (MVQVFRTIAG…VGSTRLIDNL (283 aa)) is pantoate--beta-alanine ligase. Residue 30 to 37 (MGSLHAGH) coordinates ATP. Residue H37 is the Proton donor of the active site. Q61 is a (R)-pantoate binding site. Beta-alanine is bound at residue Q61. 150-153 (GAKD) provides a ligand contact to ATP. Position 156 (Q156) interacts with (R)-pantoate. ATP-binding positions include V179 and 187–190 (MSSR). Residues 284-513 (VLNHRLPIIA…IELYKKYNKG (230 aa)) are cytidylate kinase.

The protein in the N-terminal section; belongs to the pantothenate synthetase family. It in the C-terminal section; belongs to the cytidylate kinase family. Type 1 subfamily.

The protein resides in the cytoplasm. It carries out the reaction (R)-pantoate + beta-alanine + ATP = (R)-pantothenate + AMP + diphosphate + H(+). It catalyses the reaction CMP + ATP = CDP + ADP. The catalysed reaction is dCMP + ATP = dCDP + ADP. It functions in the pathway cofactor biosynthesis; (R)-pantothenate biosynthesis; (R)-pantothenate from (R)-pantoate and beta-alanine: step 1/1. In terms of biological role, catalyzes the condensation of pantoate with beta-alanine in an ATP-dependent reaction via a pantoyl-adenylate intermediate. Catalyzes the transfer of a phosphate group from ATP to either CMP or dCMP to form CDP or dCDP and ADP, respectively. The chain is Bifunctional pantoate ligase/cytidylate kinase from Synechocystis sp. (strain ATCC 27184 / PCC 6803 / Kazusa).